Consider the following 1690-residue polypeptide: DNA-directed RNA polymerase subunit beta' (1690 aa).

Residues cysteine 63, cysteine 65, cysteine 78, and cysteine 81 each coordinate Zn(2+). Residues aspartate 753, aspartate 755, and aspartate 757 each contribute to the Mg(2+) site. The Zn(2+) site is built by cysteine 1107, cysteine 1295, cysteine 1302, and cysteine 1305.

This sequence belongs to the RNA polymerase beta' chain family. As to quaternary structure, the RNAP catalytic core consists of 2 alpha, 1 beta, 1 beta' and 1 omega subunit. When a sigma factor is associated with the core the holoenzyme is formed, which can initiate transcription. Mg(2+) is required as a cofactor. Requires Zn(2+) as cofactor.

It carries out the reaction RNA(n) + a ribonucleoside 5'-triphosphate = RNA(n+1) + diphosphate. Its function is as follows. DNA-dependent RNA polymerase catalyzes the transcription of DNA into RNA using the four ribonucleoside triphosphates as substrates. This Thermotoga neapolitana (strain ATCC 49049 / DSM 4359 / NBRC 107923 / NS-E) protein is DNA-directed RNA polymerase subunit beta'.